The primary structure comprises 380 residues: 1-deoxy-D-xylulose 5-phosphate reductoisomerase (380 aa).

Residues threonine 10, glycine 11, serine 12, isoleucine 13, glycine 35, arginine 36, asparagine 37, and asparagine 121 each coordinate NADPH. Residue lysine 122 coordinates 1-deoxy-D-xylulose 5-phosphate. Glutamate 123 contacts NADPH. Mn(2+) is bound at residue aspartate 147. Residues serine 148, glutamate 149, serine 173, and histidine 196 each contribute to the 1-deoxy-D-xylulose 5-phosphate site. A Mn(2+)-binding site is contributed by glutamate 149. Glycine 202 is an NADPH binding site. 1-deoxy-D-xylulose 5-phosphate contacts are provided by serine 209, asparagine 214, lysine 215, and glutamate 218. Mn(2+) is bound at residue glutamate 218.

This sequence belongs to the DXR family. Requires Mg(2+) as cofactor. Mn(2+) serves as cofactor.

The enzyme catalyses 2-C-methyl-D-erythritol 4-phosphate + NADP(+) = 1-deoxy-D-xylulose 5-phosphate + NADPH + H(+). It participates in isoprenoid biosynthesis; isopentenyl diphosphate biosynthesis via DXP pathway; isopentenyl diphosphate from 1-deoxy-D-xylulose 5-phosphate: step 1/6. Functionally, catalyzes the NADPH-dependent rearrangement and reduction of 1-deoxy-D-xylulose-5-phosphate (DXP) to 2-C-methyl-D-erythritol 4-phosphate (MEP). This is 1-deoxy-D-xylulose 5-phosphate reductoisomerase from Agathobacter rectalis (strain ATCC 33656 / DSM 3377 / JCM 17463 / KCTC 5835 / VPI 0990) (Eubacterium rectale).